We begin with the raw amino-acid sequence, 518 residues long: Myosin-binding protein 7 (518 aa).

Residues asparagine 69–lysine 167 form the GTD-binding domain. A disordered region spans residues valine 276–methionine 350. Residues serine 291 to threonine 301 show a composition bias toward low complexity. A compositionally biased stretch (polar residues) spans serine 310 to serine 320. Serine 385 bears the Phosphoserine mark. A coiled-coil region spans residues glutamate 399–methionine 431. A helical transmembrane segment spans residues isoleucine 458–tryptophan 477.

In terms of assembly, interacts with myosin XI-I.

It localises to the endomembrane system. Membrane-anchored myosin receptors that define a distinct, plant-specific transport vesicle compartment. This Arabidopsis thaliana (Mouse-ear cress) protein is Myosin-binding protein 7.